An 85-amino-acid chain; its full sequence is Large ribosomal subunit protein bL27 (85 aa).

The protein belongs to the bacterial ribosomal protein bL27 family.

This Pseudomonas aeruginosa (strain LESB58) protein is Large ribosomal subunit protein bL27.